The primary structure comprises 419 residues: Adenylosuccinate synthetase (419 aa).

GTP-binding positions include 15-21 (GDEGKGK) and 43-45 (GHT). Aspartate 16 serves as the catalytic Proton acceptor. Residues aspartate 16 and glycine 43 each coordinate Mg(2+). Residues 16 to 19 (DEGK), 41 to 44 (NAGH), threonine 128, arginine 142, glutamine 223, threonine 238, and arginine 302 each bind IMP. Residue histidine 44 is the Proton donor of the active site. 298–304 (TTTGRAR) contacts substrate. Residues arginine 304, 330–332 (KLD), and 408–410 (STS) each bind GTP.

Belongs to the adenylosuccinate synthetase family. As to quaternary structure, homodimer. Requires Mg(2+) as cofactor.

The protein localises to the cytoplasm. It catalyses the reaction IMP + L-aspartate + GTP = N(6)-(1,2-dicarboxyethyl)-AMP + GDP + phosphate + 2 H(+). Its pathway is purine metabolism; AMP biosynthesis via de novo pathway; AMP from IMP: step 1/2. Functionally, plays an important role in the de novo pathway of purine nucleotide biosynthesis. Catalyzes the first committed step in the biosynthesis of AMP from IMP. This is Adenylosuccinate synthetase from Sulfurimonas denitrificans (strain ATCC 33889 / DSM 1251) (Thiomicrospira denitrificans (strain ATCC 33889 / DSM 1251)).